Here is a 127-residue protein sequence, read N- to C-terminus: MYRTMMAGKLHRATVTEANLNYVGSITIDEDLLDAVGMLANEKVQIVNNNNGARLETYIIPGKRGSGVICLNGAAARLVQEGDKVIIISYQMMSDQEAKSHQPKVAVLDDQNKIEQMLGQEPAHTIL.

The active-site Schiff-base intermediate with substrate; via pyruvic acid is the serine 25. Serine 25 carries the pyruvic acid (Ser) modification. Substrate is bound at residue threonine 57. Tyrosine 58 functions as the Proton donor in the catalytic mechanism. Substrate is bound at residue 73–75; it reads GAA.

This sequence belongs to the PanD family. In terms of assembly, heterooctamer of four alpha and four beta subunits. The cofactor is pyruvate. Post-translationally, is synthesized initially as an inactive proenzyme, which is activated by self-cleavage at a specific serine bond to produce a beta-subunit with a hydroxyl group at its C-terminus and an alpha-subunit with a pyruvoyl group at its N-terminus.

It localises to the cytoplasm. It carries out the reaction L-aspartate + H(+) = beta-alanine + CO2. It participates in cofactor biosynthesis; (R)-pantothenate biosynthesis; beta-alanine from L-aspartate: step 1/1. Catalyzes the pyruvoyl-dependent decarboxylation of aspartate to produce beta-alanine. The chain is Aspartate 1-decarboxylase from Bacillus velezensis (strain DSM 23117 / BGSC 10A6 / LMG 26770 / FZB42) (Bacillus amyloliquefaciens subsp. plantarum).